Reading from the N-terminus, the 156-residue chain is UPF0039 protein Mb2876c (156 aa).

The N-acetyltransferase domain maps to 8–150 (VWAKDLDARA…PHVPMLRPGS (143 aa)).

The protein belongs to the UPF0039 (ElaA) family.

The protein is UPF0039 protein Mb2876c of Mycobacterium bovis (strain ATCC BAA-935 / AF2122/97).